A 116-amino-acid chain; its full sequence is MANHRIDRVGMEIKREVNDILQKKVRDPRVQGVTITEVQMQGDLSLAKVYYTIMSDLASDNQKAQTGLEKATGTIKRELGKQLTMYKIPDLVFEKDNSIAYGNKIDQLLRELDKKD.

This sequence belongs to the RbfA family. As to quaternary structure, monomer. Binds 30S ribosomal subunits, but not 50S ribosomal subunits or 70S ribosomes.

The protein resides in the cytoplasm. In terms of biological role, one of several proteins that assist in the late maturation steps of the functional core of the 30S ribosomal subunit. Associates with free 30S ribosomal subunits (but not with 30S subunits that are part of 70S ribosomes or polysomes). Required for efficient processing of 16S rRNA. May interact with the 5'-terminal helix region of 16S rRNA. This is Ribosome-binding factor A from Streptococcus pyogenes serotype M28 (strain MGAS6180).